Here is a 103-residue protein sequence, read N- to C-terminus: Large ribosomal subunit protein bL21 (103 aa).

This sequence belongs to the bacterial ribosomal protein bL21 family. As to quaternary structure, part of the 50S ribosomal subunit. Contacts protein L20.

Its function is as follows. This protein binds to 23S rRNA in the presence of protein L20. This is Large ribosomal subunit protein bL21 from Cupriavidus metallidurans (strain ATCC 43123 / DSM 2839 / NBRC 102507 / CH34) (Ralstonia metallidurans).